A 121-amino-acid polypeptide reads, in one-letter code: UPF0102 protein BT_2236 (121 aa).

It belongs to the UPF0102 family.

This Bacteroides thetaiotaomicron (strain ATCC 29148 / DSM 2079 / JCM 5827 / CCUG 10774 / NCTC 10582 / VPI-5482 / E50) protein is UPF0102 protein BT_2236.